Consider the following 74-residue polypeptide: Large ribosomal subunit protein bL27c (74 aa).

It belongs to the bacterial ribosomal protein bL27 family.

The protein resides in the plastid. It is found in the chloroplast. The polypeptide is Large ribosomal subunit protein bL27c (rpl27) (Pleurochrysis haptonemofera (Unicellular marine alga)).